The primary structure comprises 83 residues: Small ribosomal subunit protein eS21 (83 aa).

Belongs to the eukaryotic ribosomal protein eS21 family. As to quaternary structure, component of the 40S small ribosomal subunit. Interacts with sta.

The protein resides in the cytoplasm. Its subcellular location is the cytosol. The protein localises to the rough endoplasmic reticulum. May be an associated component of the ribosome rather than a core structural subunit. May act as a translation initiation factor. Has a role in regulation of cell proliferation in the hematopoietic organs and the imaginal disks of larva. This is Small ribosomal subunit protein eS21 (RpS21) from Drosophila ananassae (Fruit fly).